A 1744-amino-acid polypeptide reads, in one-letter code: MRLLWGLIWASSFFTLSLQKPRLLLFSPSVVHLGVPLSVGVQLQDVPRGQVVKGSVFLRNPSRNNVPCSPKVDFTLSSERDFALLSLQVPLKDAKSCGLHQLLRGPEVQLVAHSPWLKDSLSRTTNIQGINLLFSSRRGHLFLQTDQPIYNPGQRVRYRVFALDQKMRPSTDTITVMVENSHGLRVRKKEVYMPSSIFQDDFVIPDISEPGTWKISARFSDGLESNSSTQFEVKKYVLPNFEVKITPGKPYILTVPGHLDEMQLDIQARYIYGKPVQGVAYVRFGLLDEDGKKTFFRGLESQTKLVNGQSHISLSKAEFQDALEKLNMGITDLQGLRLYVAAAIIESPGGEMEEAELTSWYFVSSPFSLDLSKTKRHLVPGAPFLLQALVREMSGSPASGIPVKVSATVSSPGSVPEVQDIQQNTDGSGQVSIPIIIPQTISELQLSVSAGSPHPAIARLTVAAPPSGGPGFLSIERPDSRPPRVGDTLNLNLRAVGSGATFSHYYYMILSRGQIVFMNREPKRTLTSVSVFVDHHLAPSFYFVAFYYHGDHPVANSLRVDVQAGACEGKLELSVDGAKQYRNGESVKLHLETDSLALVALGALDTALYAAGSKSHKPLNMGKVFEAMNSYDLGCGPGGGDSALQVFQAAGLAFSDGDQWTLSRKRLSCPKEKTTRKKRNVNFQKAINEKLGQYASPTAKRCCQDGVTRLPMMRSCEQRAARVQQPDCREPFLSCCQFAESLRKKSRDKGQAGLQRALEILQEEDLIDEDDIPVRSFFPENWLWRVETVDRFQILTLWLPDSLTTWEIHGLSLSKTKGLCVATPVQLRVFREFHLHLRLPMSVRRFEQLELRPVLYNYLDKNLTVSVHVSPVEGLCLAGGGGLAQQVLVPAGSARPVAFSVVPTAATAVSLKVVARGSFEFPVGDAVSKVLQIEKEGAIHREELVYELNPLDHRGRTLEIPGNSDPNMIPDGDFNSYVRVTASDPLDTLGSEGALSPGGVASLLRLPRGCGEQTMIYLAPTLAASRYLDKTEQWSTLPPETKDHAVDLIQKGYMRIQQFRKADGSYAAWLSRGSSTWLTAFVLKVLSLAQEQVGGSPEKLQETSNWLLSQQQADGSFQDLSPVIHRSMQGGLVGNDETVALTAFVTIALHHGLAVFQDEGAEPLKQRVEASISKASSFLGEKASAGLLGAHAAAITAYALTLTKAPADLRGVAHNNLMAMAQETGDNLYWGSVTGSQSNAVSPTPAPRNPSDPMPQAPALWIETTAYALLHLLLHEGKAEMADQAAAWLTRQGSFQGGFRSTQDTVIALDALSAYWIASHTTEERGLNVTLSSTGRNGFKSHALQLNNRQIRGLEEELQFSLGSKINVKVGGNSKGTLKVLRTYNVLDMKNTTCQDLQIEVTVKGHVEYTMEANEDYEDYEYDELPAKDDPDAPLQPVTPLQLFEGRRNRRRREAPKVVEEQESRVHYTVCIWRNGKVGLSGMAIADVTLLSGFHALRADLEKLTSLSDRYVSHFETEGPHVLLYFDSVPTSRECVGFEAVQEVPVGLVQPASATLYDYYNPERRCSVFYGAPSKSRLLATLCSAEVCQCAEGKCPRQRRALERGLQDEDGYRMKFACYYPRVEYGFQVKVLREDSRAAFRLFETKITQVLHFTKDVKAAANQMRNFLVRASCRLRLEPGKEYLIMGLDGATYDLEGHPQYLLDSNSWIEEMPSERLCRSTRQRAACAQLNDFLQEYGTQGCQV.

The first 19 residues, Met1–Gln19, serve as a signal peptide directing secretion. A disulfide bridge links Cys68 with Cys97. The N-linked (GlcNAc...) asparagine glycan is linked to Asn226. An intrachain disulfide couples Cys635 to Cys669. The propeptide occupies Arg676–Arg679. 3 cysteine pairs are disulfide-bonded: Cys702/Cys728, Cys703/Cys735, and Cys716/Cys736. An Anaphylatoxin-like domain is found at Cys702 to Cys736. N-linked (GlcNAc...) asparagine glycosylation occurs at Asn862. Residue Ser918 is modified to Phosphoserine. Residues Cys1010–Gln1013 constitute a cross-link (isoglutamyl cysteine thioester (Cys-Gln)). 2 N-linked (GlcNAc...) asparagine glycosylation sites follow: Asn1328 and Asn1391. Tyr1417, Tyr1420, and Tyr1422 each carry sulfotyrosine. The propeptide occupies Arg1447–Arg1453. 5 disulfide bridges follow: Cys1471–Cys1535, Cys1583–Cys1588, Cys1595–Cys1673, Cys1618–Cys1742, and Cys1718–Cys1727. Positions Cys1595–Cys1742 constitute an NTR domain.

As to quaternary structure, in absence of complement activation, circulates in blood as a disulfide-linked trimer of an alpha, beta and gamma chain. In terms of assembly, complement C4b is composed of complement C4b-A, complement C4 beta and complement C4 gamma chains that are associated via disulfide bonds. Non-enzymatic component of the C3 convertase, also named C4bC2b, composed of the serine protease complement C2b (C2), as well as complement C4b. Non-enzymatic component of the C5 convertase, also named C4bC2bC3b, composed of the serine protease complement C2b (C2), complement C3b, as well as complement C4b. Interacts with CR1 (via Sushi 1 and Sushi 2 domains). (Microbial infection) Binds B.burgdorferi OspC, the interaction is inhibited by complement factor C2. This binding may inhibit the complement cascade and allow the bacteria to survive in the host bloodstream. Prior to secretion, the single-chain precursor is enzymatically cleaved by plasminogen (PLG) to yield non-identical chains alpha, beta and gamma. During activation of the complement systems, the alpha chain is cleaved into C4a and C4b by different proteases depending on the complement pathway: C4b stays linked to the beta and gamma chains, while C4a is released in the plasma. The alpha chain is cleaved by C1S to generate C4a and C4b following activation by the classical complement system. The alpha chain is cleaved to generate C4a and C4b by MASP2 following activation by the lectin complement system. The alpha chain is cleaved by GZMK to generate C4a and C4b following activation by the GZMK complement system. Further degradation of C4b by C1 into the inactive fragments C4c and C4d blocks the generation of C3 convertase. The proteolytic cleavages often are incomplete so that many structural forms can be found in plasma. Post-translationally, upon activation, the internal thioester bond reacts with carbohydrate antigens on the target surface to form amide or ester bonds, leading to covalent association with the surface of pathogens. In terms of processing, complement C4b interacts with complement C3b via a thioester linkage. N- and O-glycosylated. O-glycosylated with a core 1 or possibly core 8 glycan. In terms of tissue distribution, complement component C4 is expressed at highest levels in the liver, at moderate levels in the adrenal cortex, adrenal medulla, thyroid gland, and the kidney, and at lowest levels in the heart, ovary, small intestine, thymus, pancreas and spleen. The extra-hepatic sites of expression may be important for the local protection and inflammatory response.

The protein resides in the secreted. It localises to the synapse. The protein localises to the cell projection. It is found in the axon. Its subcellular location is the dendrite. The protein resides in the cell surface. Precursor of non-enzymatic components of the classical, lectin and GZMK complement pathways, which consist in a cascade of proteins that leads to phagocytosis and breakdown of pathogens and signaling that strengthens the adaptive immune system. Functionally, non-enzymatic component of C3 and C5 convertases. Generated following cleavage by complement proteases (C1S, MASP2 or GZMK, depending on the complement pathway), it covalently attaches to the surface of pathogens, where it acts as an opsonin that marks the surface of antigens for removal. It then recruits the serine protease complement C2b to form the C3 and C5 convertases, which cleave and activate C3 and C5, respectively, the next components of the complement pathways. Complement C4b-B isotype catalyzes the transacylation of the thioester carbonyl group to form ester bonds with carbohydrate antigens, while C4b-A isotype is responsible for effective binding to form amide bonds with immune aggregates or protein antigens. Its function is as follows. Putative humoral mediator released following cleavage by complement proteases (C1S, MASP2 or GZMK, depending on the complement pathway). While it is strongly similar to anaphylatoxins, its role is unclear. Was reported to act as a mediator of local inflammatory process; however these effects were probably due to contamination with C3a and/C5a anaphylatoxins in biological assays. The protein is Complement C4-B of Homo sapiens (Human).